The chain runs to 158 residues: MQGRLSAWLVKHGLIHRSLGFDYQGIETLQIKSEDWHSIAVILYVYGYNYLRSQCAYDVAPGGLLASVYHLTRIEYGVDQPEEVCIKVFVSRRNPRIPSVFWVWKSVDFQERESYDMLGISYDNHPRLKRILMPESWIGWPLRKDYVAPNFYEIQDAH.

This sequence belongs to the complex I 30 kDa subunit family. In terms of assembly, NDH is composed of at least 16 different subunits, 5 of which are encoded in the nucleus.

It localises to the plastid. The protein localises to the chloroplast thylakoid membrane. The catalysed reaction is a plastoquinone + NADH + (n+1) H(+)(in) = a plastoquinol + NAD(+) + n H(+)(out). It catalyses the reaction a plastoquinone + NADPH + (n+1) H(+)(in) = a plastoquinol + NADP(+) + n H(+)(out). Functionally, NDH shuttles electrons from NAD(P)H:plastoquinone, via FMN and iron-sulfur (Fe-S) centers, to quinones in the photosynthetic chain and possibly in a chloroplast respiratory chain. The immediate electron acceptor for the enzyme in this species is believed to be plastoquinone. Couples the redox reaction to proton translocation, and thus conserves the redox energy in a proton gradient. The chain is NAD(P)H-quinone oxidoreductase subunit J, chloroplastic from Coffea arabica (Arabian coffee).